The sequence spans 73 residues: Putative membrane protein insertion efficiency factor (73 aa).

It belongs to the UPF0161 family.

It is found in the cell inner membrane. In terms of biological role, could be involved in insertion of integral membrane proteins into the membrane. This Rickettsia bellii (strain OSU 85-389) protein is Putative membrane protein insertion efficiency factor.